Reading from the N-terminus, the 424-residue chain is Tyrosine--tRNA ligase (424 aa).

Residue tyrosine 37 participates in L-tyrosine binding. The 'HIGH' region motif lies at 42 to 51 (PTADSLHIGS). L-tyrosine is bound by residues tyrosine 174 and glutamine 178. The short motif at 234-238 (KFGKT) is the 'KMSKS' region element. An ATP-binding site is contributed by lysine 237. The 66-residue stretch at 357 to 422 (SGLIDALAAG…RGKKLYALVD (66 aa)) folds into the S4 RNA-binding domain.

Belongs to the class-I aminoacyl-tRNA synthetase family. TyrS type 1 subfamily. In terms of assembly, homodimer.

It is found in the cytoplasm. It catalyses the reaction tRNA(Tyr) + L-tyrosine + ATP = L-tyrosyl-tRNA(Tyr) + AMP + diphosphate + H(+). Its function is as follows. Catalyzes the attachment of tyrosine to tRNA(Tyr) in a two-step reaction: tyrosine is first activated by ATP to form Tyr-AMP and then transferred to the acceptor end of tRNA(Tyr). The sequence is that of Tyrosine--tRNA ligase from Chromobacterium violaceum (strain ATCC 12472 / DSM 30191 / JCM 1249 / CCUG 213 / NBRC 12614 / NCIMB 9131 / NCTC 9757 / MK).